The following is a 443-amino-acid chain: Thymidine phosphorylase (443 aa).

The protein belongs to the thymidine/pyrimidine-nucleoside phosphorylase family. As to quaternary structure, homodimer.

The enzyme catalyses thymidine + phosphate = 2-deoxy-alpha-D-ribose 1-phosphate + thymine. The protein operates within pyrimidine metabolism; dTMP biosynthesis via salvage pathway; dTMP from thymine: step 1/2. In terms of biological role, the enzymes which catalyze the reversible phosphorolysis of pyrimidine nucleosides are involved in the degradation of these compounds and in their utilization as carbon and energy sources, or in the rescue of pyrimidine bases for nucleotide synthesis. The chain is Thymidine phosphorylase from Shewanella amazonensis (strain ATCC BAA-1098 / SB2B).